Consider the following 151-residue polypeptide: Succinate dehydrogenase subunit 4, mitochondrial (151 aa).

The transit peptide at 1-78 (MSLRRTILDL…RSISSSIGQS (78 aa)) directs the protein to the mitochondrion. His-109 contacts heme. Tyr-121 is a binding site for a ubiquinone. A helical membrane pass occupies residues 130-150 (LIVMSLGLFQIIVLKDIILFL).

In terms of assembly, component of complex II composed of eight subunits in plants: four classical SDH subunits SDH1, SDH2, SDH3 and SDH4 (a flavoprotein (FP), an iron-sulfur protein (IP), and a cytochrome b composed of a large and a small subunit.), as well as four subunits unknown in mitochondria from bacteria and heterotrophic eukaryotes. It depends on heme as a cofactor. Expressed in flowers, inflorescences and stems.

Its subcellular location is the mitochondrion inner membrane. Its pathway is carbohydrate metabolism; tricarboxylic acid cycle. In terms of biological role, membrane-anchoring subunit of succinate dehydrogenase (SDH). In Arabidopsis thaliana (Mouse-ear cress), this protein is Succinate dehydrogenase subunit 4, mitochondrial.